A 256-amino-acid chain; its full sequence is Glutamate racemase (256 aa).

Substrate-binding positions include 12–13 and 44–45; these read DS and YG. The Proton donor/acceptor role is filled by Cys75. 76–77 lines the substrate pocket; the sequence is NT. Residue Cys186 is the Proton donor/acceptor of the active site. 187–188 is a substrate binding site; that stretch reads TH.

This sequence belongs to the aspartate/glutamate racemases family.

It carries out the reaction L-glutamate = D-glutamate. It participates in cell wall biogenesis; peptidoglycan biosynthesis. Functionally, provides the (R)-glutamate required for cell wall biosynthesis. The chain is Glutamate racemase from Clostridium acetobutylicum (strain ATCC 824 / DSM 792 / JCM 1419 / IAM 19013 / LMG 5710 / NBRC 13948 / NRRL B-527 / VKM B-1787 / 2291 / W).